Here is a 457-residue protein sequence, read N- to C-terminus: uncharacterized protein (457 aa).

Residues 10 to 69 (ALLQGQTVTVPITALAAGGDGIARLTDGRVLFVAGAVPGDTVEARLVHLKKDHGFGKILQ) form the TRAM domain. Cys82, Cys88, Cys91, and Cys170 together coordinate [4Fe-4S] cluster. The S-adenosyl-L-methionine site is built by Gln294, Tyr323, Glu344, and Asp387. Cys414 (nucleophile) is an active-site residue.

It belongs to the class I-like SAM-binding methyltransferase superfamily. RNA M5U methyltransferase family.

This is an uncharacterized protein from Gloeobacter violaceus (strain ATCC 29082 / PCC 7421).